We begin with the raw amino-acid sequence, 975 residues long: E3 ubiquitin-protein ligase BRE1A (975 aa).

The disordered stretch occupies residues 1-30; the sequence is MSGIGNKRAAGEPGTSMPPEKKAAVEDSGT. Lys21 is modified (N6-acetyllysine). Phosphoserine is present on Ser41. Positions 43–90 form a coiled coil; it reads TEELDIRTLQTKNRKLAEMLDQRQAIEDELREHIEKLERRQATDDASL. The tract at residues 125–155 is disordered; the sequence is KALVVPEPEPDSDSNQERKDDRERGEGQEPA. A phosphoserine mark is found at Ser136 and Ser138. A compositionally biased stretch (basic and acidic residues) spans 139–151; sequence NQERKDDRERGEG. 2 coiled-coil regions span residues 168–375 and 429–898; these read EEME…EQVV and SLHK…TTKK. Lys348 and Lys510 each carry N6-acetyllysine. The interval 507–622 is disordered; that stretch reads DLNKTRLRSG…GKHDDGRKKE (116 aa). Position 522 is a phosphoserine (Ser522). Residues 527 to 540 are compositionally biased toward basic and acidic residues; the sequence is EDPKDEPAELKPDS. The segment covering 543-552 has biased composition (low complexity); the sequence is LSSQSSASKA. A compositionally biased stretch (basic and acidic residues) spans 558–622; that stretch reads NEIKSKRDEE…GKHDDGRKKE (65 aa). A Phosphoserine modification is found at Ser562. The RING-type zinc finger occupies 922–961; that stretch reads CPCCNMRKKDAVLTKCFHVFCFECVKTRYDTRQRKCPKCN.

Belongs to the BRE1 family. Component of the RNF20/40 complex (also known as BRE1 complex) probably composed of 2 copies of RNF20/BRE1A and 2 copies of RNF40/BRE1B. Interacts with UBE2E1/UBCH6. Interacts with p53/TP53 and WAC. Interacts with PAF1; the interaction mediates the association of the PAF1 and RNF20/40 complexes which is a prerequsite for recruitment of UBE2A/B. Interacts with isoform 1 and isoform 2 of PA2G4. Interacts with FBXL19. As to quaternary structure, (Microbial infection) Interacts with human herpesvirus 8 (KSHV) protein RTA/ORF50; this interaction targets the SMC5-SMC6 complex for proteasomal degradation. Expressed in the normal brain and also in malignant gliomas (at protein level).

The protein localises to the nucleus. The catalysed reaction is S-ubiquitinyl-[E2 ubiquitin-conjugating enzyme]-L-cysteine + [acceptor protein]-L-lysine = [E2 ubiquitin-conjugating enzyme]-L-cysteine + N(6)-ubiquitinyl-[acceptor protein]-L-lysine.. The protein operates within protein modification; protein ubiquitination. Functionally, component of the RNF20/40 E3 ubiquitin-protein ligase complex that mediates monoubiquitination of 'Lys-120' of histone H2B (H2BK120ub1). H2BK120ub1 gives a specific tag for epigenetic transcriptional activation and is also prerequisite for histone H3 'Lys-4' and 'Lys-79' methylation (H3K4me and H3K79me, respectively). It thereby plays a central role inb histone code and gene regulation. The RNF20/40 complex forms a H2B ubiquitin ligase complex in cooperation with the E2 enzyme UBE2A or UBE2B; reports about the cooperation with UBE2E1/UBCH are contradictory. Required for transcriptional activation of Hox genes. Recruited to the MDM2 promoter, probably by being recruited by p53/TP53, and thereby acts as a transcriptional coactivator. Mediates the polyubiquitination of isoform 2 of PA2G4 in cancer cells leading to its proteasome-mediated degradation. (Microbial infection) Promotes the human herpesvirus 8 (KSHV) lytic cycle by inducing the expression of lytic viral genes including the latency switch gene RTA/ORF50. This chain is E3 ubiquitin-protein ligase BRE1A (RNF20), found in Homo sapiens (Human).